We begin with the raw amino-acid sequence, 519 residues long: ATP synthase subunit alpha (519 aa).

Residue 175 to 182 (GDRQTGKT) coordinates ATP.

This sequence belongs to the ATPase alpha/beta chains family. In terms of assembly, F-type ATPases have 2 components, CF(1) - the catalytic core - and CF(0) - the membrane proton channel. CF(1) has five subunits: alpha(3), beta(3), gamma(1), delta(1), epsilon(1). CF(0) has three main subunits: a(1), b(2) and c(9-12). The alpha and beta chains form an alternating ring which encloses part of the gamma chain. CF(1) is attached to CF(0) by a central stalk formed by the gamma and epsilon chains, while a peripheral stalk is formed by the delta and b chains.

The protein localises to the cell inner membrane. It catalyses the reaction ATP + H2O + 4 H(+)(in) = ADP + phosphate + 5 H(+)(out). Produces ATP from ADP in the presence of a proton gradient across the membrane. The alpha chain is a regulatory subunit. This Acinetobacter baylyi (strain ATCC 33305 / BD413 / ADP1) protein is ATP synthase subunit alpha.